The chain runs to 366 residues: Peptide chain release factor 2 (366 aa).

The residue at position 251 (Q251) is an N5-methylglutamine.

This sequence belongs to the prokaryotic/mitochondrial release factor family. Post-translationally, methylated by PrmC. Methylation increases the termination efficiency of RF2.

It is found in the cytoplasm. In terms of biological role, peptide chain release factor 2 directs the termination of translation in response to the peptide chain termination codons UGA and UAA. The sequence is that of Peptide chain release factor 2 (prfB) from Listeria monocytogenes serotype 4b (strain F2365).